The primary structure comprises 362 residues: Cobalt-precorrin-5B C(1)-methyltransferase (362 aa).

The protein belongs to the CbiD family.

The catalysed reaction is Co-precorrin-5B + S-adenosyl-L-methionine = Co-precorrin-6A + S-adenosyl-L-homocysteine. It participates in cofactor biosynthesis; adenosylcobalamin biosynthesis; cob(II)yrinate a,c-diamide from sirohydrochlorin (anaerobic route): step 6/10. In terms of biological role, catalyzes the methylation of C-1 in cobalt-precorrin-5B to form cobalt-precorrin-6A. The protein is Cobalt-precorrin-5B C(1)-methyltransferase of Burkholderia cenocepacia (strain HI2424).